A 1141-amino-acid polypeptide reads, in one-letter code: MAYPVKVGARERWTFAKIKETLELPNLIEIQRNSYQWFIDTGLRELFHDISPIQDFTGNLILQFVDYSLGEPKYSEDECKERDMTYAAPLRVKVRLINRETGEVKEQEVFMGDFPLMTDKGTFIINGAERVIVSQLVRSPGAYYAEGIDASGTKVYGATVIPNRGAWLEFETDNTESIYVRIDRTRKIPVTILLRALGYNTNARILELFDYDGRIQNTLEKDNTESEEEALVEIYKRLRPGEPPTVDSARNLLESLFFDPRRYDLGNVGRYKLHKKFNHGILTREVDGREEYIRTLTKEDIIYTIKYLLRLMDGEVKPDDIDHLGNRRLRSVGELLQNQFRIGLARMERVVRERMTIQDVDVITPQVLINIRPVVAAIKEFFGSSQLSQFMDQTNPLAELTHKRRLSALGPGGLSRERAGFEVRDVHTSHYGRMCPIETPEGPNIGLIGSLSTYARINEFGFIETPYRRVDKEKGIVTNQVDYLTADEEDKYFIAQANAPLDEEGHFLEKRVNARHGGEILVVPASQVDYMDVSPKQMVSVATALIPFLEHDDANRALMGANMQRQAVPLLRTEAPIVGTGMEWRAARDSGTVVLARNNGVVERVTAREIVIRTDNGHLETYRLQKFVRSNQGTCINQKPIVRKGERVSAGQTIADGPSTDQGELALGRNILVAFMTWEGYNYEDAILISEKLVKDDIFTSIHIEEYECDARDTKLGPEEITRDIPNVSEDVLKDLDERGIIRIGAEVRPGDILVGKVTPKGETELTAEERLLRAIFGEKAREVRDTSLRVPHGESGIVVDVKVFSRENGDELAPGVNELVRVYIAQKRKISVGDKMAGRHGNKGVISRILPEEDMPFLPDGTPIEIVLNPLGVPSRMNLGQILETHLGRAARALGITVATPVFDGATEEEIKEAFRKAGLPEDGKTILYDGRTGEPFDRPITVGYMYMLKLAHLVDDKIHARSTGPYSLVTQQPLGGKAQFGGQRFGEMEVWALEAYGAAYTLQEILTVKSDDVVGRVKTYEAIVKGENVPEPGVPESFKVLIKELQSLGLDVKVLSEENEEIEIKEDDDDVSESAQELGLDVHGQPNTAPESEGGNEEDKEAEADEDFDPADLDPSELELDADLNDDLVVPDEAYGDEE.

2 stretches are compositionally biased toward acidic residues: residues glutamate 1063–serine 1074 and glycine 1096–glutamate 1141. Residues glutamate 1063–glutamate 1141 are disordered.

The protein belongs to the RNA polymerase beta chain family. As to quaternary structure, the RNAP catalytic core consists of 2 alpha, 1 beta, 1 beta' and 1 omega subunit. When a sigma factor is associated with the core the holoenzyme is formed, which can initiate transcription.

The enzyme catalyses RNA(n) + a ribonucleoside 5'-triphosphate = RNA(n+1) + diphosphate. Functionally, DNA-dependent RNA polymerase catalyzes the transcription of DNA into RNA using the four ribonucleoside triphosphates as substrates. This Moorella thermoacetica (strain ATCC 39073 / JCM 9320) protein is DNA-directed RNA polymerase subunit beta.